Consider the following 310-residue polypeptide: Methionyl-tRNA formyltransferase (310 aa).

(6S)-5,6,7,8-tetrahydrofolate is bound at residue Ser-110–Pro-113.

Belongs to the Fmt family.

It carries out the reaction L-methionyl-tRNA(fMet) + (6R)-10-formyltetrahydrofolate = N-formyl-L-methionyl-tRNA(fMet) + (6S)-5,6,7,8-tetrahydrofolate + H(+). In terms of biological role, attaches a formyl group to the free amino group of methionyl-tRNA(fMet). The formyl group appears to play a dual role in the initiator identity of N-formylmethionyl-tRNA by promoting its recognition by IF2 and preventing the misappropriation of this tRNA by the elongation apparatus. This chain is Methionyl-tRNA formyltransferase, found in Mycolicibacterium vanbaalenii (strain DSM 7251 / JCM 13017 / BCRC 16820 / KCTC 9966 / NRRL B-24157 / PYR-1) (Mycobacterium vanbaalenii).